We begin with the raw amino-acid sequence, 130 residues long: Small ribosomal subunit protein uS9 (130 aa).

It belongs to the universal ribosomal protein uS9 family.

This Citrobacter koseri (strain ATCC BAA-895 / CDC 4225-83 / SGSC4696) protein is Small ribosomal subunit protein uS9.